We begin with the raw amino-acid sequence, 158 residues long: L-alanine exporter AlaE (158 aa).

The next 4 helical transmembrane spans lie at 23-43 (FAMVVYCSVVGMMIEIFVSGM), 53-73 (LVAIPVNMVIAWPYGLYRDAV), 92-112 (VIAYITFQSPVYAAILLFVGA), and 117-137 (IITAVSSNIVVSMMMGAAYGY).

Belongs to the AlaE exporter family.

The protein resides in the cell inner membrane. In terms of biological role, exports L-alanine. This Cronobacter sakazakii (strain ATCC BAA-894) (Enterobacter sakazakii) protein is L-alanine exporter AlaE.